Here is a 502-residue protein sequence, read N- to C-terminus: RNA polymerase sigma factor sigA (502 aa).

The N-terminal 23 residues, 1-23 (MATAAVIGLNTGKRLLSSSFYHS), are a transit peptide targeting the chloroplast. A compositionally biased stretch (polar residues) spans 57 to 71 (YSPSFPSSNRHTQSA). The disordered stretch occupies residues 57-92 (YSPSFPSSNRHTQSAKALKESVDVASTEKPWLPNGT). Thr170 is modified (phosphothreonine). A Polymerase core binding motif is present at residues 287 to 300 (DLVQGGLIGLLRGI). A DNA-binding region (H-T-H motif) is located at residues 461–480 (WEDISKRIGLSRERVRQVGL).

The protein belongs to the sigma-70 factor family. In terms of assembly, interacts with SIB1 in chloroplast. Binds to CSK. Post-translationally, the phosphorylation of Thr-170 mediated by oxidative conditions of plastoquinone (PQ) changes the promoter specificity, selectively inhibiting the transcription of the psaA gene, which encodes a PS-I protein. Phosphorylation of the holoenzyme occurs in the dark. This phosphorylation in response to plastoquinone redox state modification is mediated by CSK. In terms of tissue distribution, highly expressed in leaves, and to a lesser extent in roots. Expressed in old seedlings (8 days), cotyledons, hypocotyls, leaves, sepals and siliques.

The protein resides in the plastid. Its subcellular location is the chloroplast. Its function is as follows. Essential protein. Sigma factors are initiation factors that promote the attachment of plastid-encoded RNA polymerase (PEP) to specific initiation sites and are then released. Controls the transcription of the psaA gene and thus modulates photosystem stoichiometry. Thereby maintains a harmonious electron flow and photosynthetic efficiency. The protein is RNA polymerase sigma factor sigA (SIGA) of Arabidopsis thaliana (Mouse-ear cress).